The following is a 177-amino-acid chain: ATP synthase subunit delta (177 aa).

Belongs to the ATPase delta chain family. F-type ATPases have 2 components, F(1) - the catalytic core - and F(0) - the membrane proton channel. F(1) has five subunits: alpha(3), beta(3), gamma(1), delta(1), epsilon(1). F(0) has three main subunits: a(1), b(2) and c(10-14). The alpha and beta chains form an alternating ring which encloses part of the gamma chain. F(1) is attached to F(0) by a central stalk formed by the gamma and epsilon chains, while a peripheral stalk is formed by the delta and b chains.

The protein resides in the cell inner membrane. Functionally, f(1)F(0) ATP synthase produces ATP from ADP in the presence of a proton or sodium gradient. F-type ATPases consist of two structural domains, F(1) containing the extramembraneous catalytic core and F(0) containing the membrane proton channel, linked together by a central stalk and a peripheral stalk. During catalysis, ATP synthesis in the catalytic domain of F(1) is coupled via a rotary mechanism of the central stalk subunits to proton translocation. In terms of biological role, this protein is part of the stalk that links CF(0) to CF(1). It either transmits conformational changes from CF(0) to CF(1) or is implicated in proton conduction. The protein is ATP synthase subunit delta of Aeromonas hydrophila subsp. hydrophila (strain ATCC 7966 / DSM 30187 / BCRC 13018 / CCUG 14551 / JCM 1027 / KCTC 2358 / NCIMB 9240 / NCTC 8049).